Here is a 173-residue protein sequence, read N- to C-terminus: Xanthine-guanine phosphoribosyltransferase (173 aa).

5-phospho-alpha-D-ribose 1-diphosphate-binding positions include 48 to 49 and 107 to 115; these read RG and DDLVDTGKT. A Mg(2+)-binding site is contributed by Asp-108. Residues Asp-111 and Ile-154 each coordinate guanine. Residues Asp-111 and Ile-154 each contribute to the xanthine site. GMP contacts are provided by residues 111–115 and 153–154; these read DTGKT and WI.

Belongs to the purine/pyrimidine phosphoribosyltransferase family. XGPT subfamily. Homotetramer. The cofactor is Mg(2+).

The protein localises to the cell inner membrane. The enzyme catalyses GMP + diphosphate = guanine + 5-phospho-alpha-D-ribose 1-diphosphate. The catalysed reaction is XMP + diphosphate = xanthine + 5-phospho-alpha-D-ribose 1-diphosphate. It catalyses the reaction IMP + diphosphate = hypoxanthine + 5-phospho-alpha-D-ribose 1-diphosphate. The protein operates within purine metabolism; GMP biosynthesis via salvage pathway; GMP from guanine: step 1/1. It functions in the pathway purine metabolism; XMP biosynthesis via salvage pathway; XMP from xanthine: step 1/1. Its function is as follows. Purine salvage pathway enzyme that catalyzes the transfer of the ribosyl-5-phosphate group from 5-phospho-alpha-D-ribose 1-diphosphate (PRPP) to the N9 position of the 6-oxopurines guanine and xanthine to form the corresponding ribonucleotides GMP (guanosine 5'-monophosphate) and XMP (xanthosine 5'-monophosphate), with the release of PPi. To a lesser extent, also acts on hypoxanthine. This chain is Xanthine-guanine phosphoribosyltransferase, found in Rhodopseudomonas palustris (strain ATCC BAA-98 / CGA009).